Reading from the N-terminus, the 492-residue chain is Lipopolysaccharide biosynthesis protein WzxC (492 aa).

Residues M1–K12 lie on the Cytoplasmic side of the membrane. A helical transmembrane segment spans residues W13–A33. Topologically, residues R34–G42 are periplasmic. Residues L43 to A63 form a helical membrane-spanning segment. Topologically, residues N64 to Y81 are cytoplasmic. A helical membrane pass occupies residues W82–I102. Topologically, residues G103–D104 are periplasmic. The chain crosses the membrane as a helical span at residues V105–I125. At P126–T157 the chain is on the cytoplasmic side. A helical transmembrane segment spans residues C158–V178. Residues N179–R236 lie on the Periplasmic side of the membrane. A helical membrane pass occupies residues I237–P257. The Cytoplasmic portion of the chain corresponds to M258–K288. Residues L289–N309 traverse the membrane as a helical segment. The Periplasmic segment spans residues N310–S322. The helical transmembrane segment at I323–I343 threads the bilayer. Residues G344 to T364 are Cytoplasmic-facing. Residues F365–L385 traverse the membrane as a helical segment. A topological domain (periplasmic) is located at residue G386. Residues F387 to L407 traverse the membrane as a helical segment. Topologically, residues G408 to S417 are cytoplasmic. A helical transmembrane segment spans residues L418–V438. The Periplasmic segment spans residues L439–L445. A helical transmembrane segment spans residues G446–L466. The Cytoplasmic segment spans residues S467 to G492.

This sequence belongs to the polysaccharide synthase family.

Its subcellular location is the cell inner membrane. It functions in the pathway bacterial outer membrane biogenesis; lipopolysaccharide biosynthesis. The protein is Lipopolysaccharide biosynthesis protein WzxC (wzxC) of Escherichia coli (strain K12).